A 104-amino-acid chain; its full sequence is UPF0145 protein NP_2600A (104 aa).

The protein belongs to the UPF0145 family.

This Natronomonas pharaonis (strain ATCC 35678 / DSM 2160 / CIP 103997 / JCM 8858 / NBRC 14720 / NCIMB 2260 / Gabara) (Halobacterium pharaonis) protein is UPF0145 protein NP_2600A.